The primary structure comprises 398 residues: Arylacetamide deacetylase (398 aa).

The Cytoplasmic portion of the chain corresponds to 1 to 4; the sequence is GVKT. The chain crosses the membrane as a helical; Signal-anchor for type II membrane protein span at residues 5-22; it reads VLLLIVGVLGAYYVYTPL. Topologically, residues 23–398 are lumenal; it reads PDNIEEPWRL…QYFEWLRENV (376 aa). Asn77 carries N-linked (GlcNAc...) asparagine glycosylation. The Involved in the stabilization of the negatively charged intermediate by the formation of the oxyanion hole motif lies at 110–112; the sequence is HGG. A disulfide bond links Cys115 and Cys339. Residue Ser188 is part of the active site. Asn281 carries an N-linked (GlcNAc...) asparagine glycan. Residues Asp342 and His372 contribute to the active site.

It belongs to the 'GDXG' lipolytic enzyme family. Post-translationally, glycosylated.

The protein localises to the endoplasmic reticulum membrane. It localises to the microsome membrane. The enzyme catalyses a triacylglycerol + H2O = a diacylglycerol + a fatty acid + H(+). Inhibited by diisopropylphosphofluoridate (DFP). In terms of biological role, displays cellular triglyceride lipase activity in liver, increases the levels of intracellular fatty acids derived from the hydrolysis of newly formed triglyceride stores and plays a role in very low-density lipoprotein assembly. Displays serine esterase activity in liver. Deacetylates a variety of arylacetamide substrates, including xenobiotic compounds and procarcinogens, converting them to the primary arylamide compounds and increasing their toxicity. The protein is Arylacetamide deacetylase of Oryctolagus cuniculus (Rabbit).